We begin with the raw amino-acid sequence, 332 residues long: Holliday junction branch migration complex subunit RuvB (332 aa).

A large ATPase domain (RuvB-L) region spans residues Met-1 to Tyr-182. ATP contacts are provided by residues Leu-21, Arg-22, Gly-63, Lys-66, Thr-67, Thr-68, Glu-129–Phe-131, Arg-172, Tyr-182, and Arg-219. Thr-67 provides a ligand contact to Mg(2+). The small ATPAse domain (RuvB-S) stretch occupies residues Asp-183–Ser-253. Residues Glu-256–Arg-332 form a head domain (RuvB-H) region. Arg-311 and Arg-316 together coordinate DNA.

Belongs to the RuvB family. As to quaternary structure, homohexamer. Forms an RuvA(8)-RuvB(12)-Holliday junction (HJ) complex. HJ DNA is sandwiched between 2 RuvA tetramers; dsDNA enters through RuvA and exits via RuvB. An RuvB hexamer assembles on each DNA strand where it exits the tetramer. Each RuvB hexamer is contacted by two RuvA subunits (via domain III) on 2 adjacent RuvB subunits; this complex drives branch migration. In the full resolvosome a probable DNA-RuvA(4)-RuvB(12)-RuvC(2) complex forms which resolves the HJ.

It is found in the cytoplasm. The catalysed reaction is ATP + H2O = ADP + phosphate + H(+). Functionally, the RuvA-RuvB-RuvC complex processes Holliday junction (HJ) DNA during genetic recombination and DNA repair, while the RuvA-RuvB complex plays an important role in the rescue of blocked DNA replication forks via replication fork reversal (RFR). RuvA specifically binds to HJ cruciform DNA, conferring on it an open structure. The RuvB hexamer acts as an ATP-dependent pump, pulling dsDNA into and through the RuvAB complex. RuvB forms 2 homohexamers on either side of HJ DNA bound by 1 or 2 RuvA tetramers; 4 subunits per hexamer contact DNA at a time. Coordinated motions by a converter formed by DNA-disengaged RuvB subunits stimulates ATP hydrolysis and nucleotide exchange. Immobilization of the converter enables RuvB to convert the ATP-contained energy into a lever motion, pulling 2 nucleotides of DNA out of the RuvA tetramer per ATP hydrolyzed, thus driving DNA branch migration. The RuvB motors rotate together with the DNA substrate, which together with the progressing nucleotide cycle form the mechanistic basis for DNA recombination by continuous HJ branch migration. Branch migration allows RuvC to scan DNA until it finds its consensus sequence, where it cleaves and resolves cruciform DNA. The chain is Holliday junction branch migration complex subunit RuvB from Protochlamydia amoebophila (strain UWE25).